Here is a 1041-residue protein sequence, read N- to C-terminus: Beta-galactosidase (1041 aa).

Positions 103 and 201 each coordinate substrate. A Na(+)-binding site is contributed by aspartate 201. Residues glutamate 415, histidine 417, and glutamate 460 each coordinate Mg(2+). Residues glutamate 460 and 536–539 (EYAH) contribute to the substrate site. Glutamate 460 serves as the catalytic Proton donor. The active-site Nucleophile is the glutamate 536. Mg(2+) is bound at residue asparagine 596. Na(+)-binding residues include phenylalanine 600 and asparagine 603. 2 residues coordinate substrate: asparagine 603 and tryptophan 1016.

This sequence belongs to the glycosyl hydrolase 2 family. As to quaternary structure, homotetramer. Mg(2+) serves as cofactor. The cofactor is Na(+).

The catalysed reaction is Hydrolysis of terminal non-reducing beta-D-galactose residues in beta-D-galactosides.. The sequence is that of Beta-galactosidase from Alteromonas mediterranea (strain DSM 17117 / CIP 110805 / LMG 28347 / Deep ecotype).